We begin with the raw amino-acid sequence, 2892 residues long: Inositol 1,4,5-trisphosphate receptor itr-1 (2892 aa).

Topologically, residues 1-2475 (MNPSYGRVRK…YPLPEHSNSS (2475 aa)) are cytoplasmic. MIR domains are found at residues 192–246 (GNVI…IEPA), 319–379 (QNSV…VQVV), 386–466 (GGTA…LGPT), and 490–551 (NKEV…LLPV). Residue 357 to 361 (RMTNR) participates in 1D-myo-inositol 1,4,5-trisphosphate binding. 1D-myo-inositol 1,4,5-trisphosphate-binding positions include 625 to 628 (KLLR) and 689 to 691 (YRK). Positions 1030–1056 (MMRGGNKENSKDLAKTPSVTAEEAGRT) are disordered. The span at 1034–1043 (GNKENSKDLA) shows a compositional bias: basic and acidic residues. The chain crosses the membrane as a helical span at residues 2476–2496 (ISLGNLYSWFAVFSSFLLAHY). The Extracellular segment spans residues 2497–2514 (LRHDKIYLHKTSLLILAS). Residues 2515–2535 (LCFLLLSSIGVTLTLYIFGIL) traverse the membrane as a helical segment. Residues 2536-2572 (QLVNKIVHVVAFVSNKGLEDRPIAEILACRNLHYLLV) are Cytoplasmic-facing. A helical transmembrane segment spans residues 2573 to 2593 (YLFICILGLLVHPMIYCILLF). Residues 2594–2615 (DIIFTEETLQNVIASVTRNYQS) lie on the Extracellular side of the membrane. Residues 2616-2636 (IVWTGLLALILLYFFSILGFL) form a helical membrane-spanning segment. Topologically, residues 2637–2735 (YFRHDFYLEV…FIWRVAYDMT (99 aa)) are cytoplasmic. The span at 2655–2666 (ATISSGIPSETC) shows a compositional bias: polar residues. A disordered region spans residues 2655–2685 (ATISSGIPSETCPSEGCPGLQPSEKDDNDDE). Residues 2736–2756 (FFVVLIVIVLNLIFGVIIDTF) traverse the membrane as a helical segment. Topologically, residues 2757-2892 (GDLRAEKNEK…RAFMEQFQPR (136 aa)) are extracellular.

This sequence belongs to the InsP3 receptor family. As to quaternary structure, interacts with myo-1, myo-2, unc-54/myo-4 and nmy-2. Also interacts with iri-1. As to expression, isoform a is expressed in the anterior cells of the pharyngeal terminal bulb, vulva, rectal epithelial cells, spicule protractor muscles of the proctodeum and male-specific neuron CP8 or CP9. Isoform d is expressed in the spermatheca, excretory cell, amphid socket cells, PDA motor neuron, spicule retractor muscles, gubernaculum retractor muscles, posterior oblique muscles, diagonal muscles and the vas deferens. Also expressed in the intestine, pharynx, pharyngeal isthmus, pharyngeal intestinal valve, somatic gonad, hypodermal cells of the vulva, uterine sheath cells, tail, head, LUA motor neuron and the embryonic epidermis (at protein level).

The protein localises to the endoplasmic reticulum membrane. Receptor for inositol 1,4,5-trisphosphate, a second messenger that regulates intracellular calcium homeostasis. Binds in vitro to both inositol 1,4,5-trisphosphate (1,4,5-InsP3) and inositol 2,4,5-trisphosphate (2,4,5-InsP3) with high affinity and does not discriminate between the phosphate at 1 or 2 position. Can also bind inositol 1,3,4,5-tetrakisphosphate (1,3,4,5-InsP4) and inositol 4,5-bisphosphate (4,5-InsP2), but with lower affinity. Acts as a timekeeper/rhythm generator via calcium signaling, affecting the defecation cycle and pharyngeal pumping. Affects normal hermaphrodite and male fertility as a participant in intracellular signaling by acting downstream of let-23/lin-3 which regulates ovulation, spermathecal valve dilation and male mating behavior. Important for early embryonic development; controls epidermal cell migration and may also regulate filopodial protrusive activity during epithelial morphogenesis. Component of inositol trisphosphate (IP3)-mediated downstream signaling pathways that controls amphid sensory neuronal (ASH)-mediated response to nose touch and benzaldehyde but not other ASH-mediated responses. Involved in modulating lifespan, acting downstream of transcription factor atf-6. This Caenorhabditis elegans protein is Inositol 1,4,5-trisphosphate receptor itr-1.